A 359-amino-acid chain; its full sequence is Opine dehydrogenase (359 aa).

The protein belongs to the lysopine/nopaline/octopine/opine/vitopine dehydrogenases family. In terms of assembly, homodimer.

The catalysed reaction is (2S)-2-[(R)-1-carboxyethylamino]pentanoate + NAD(+) + H2O = L-2-aminopentanoate + pyruvate + NADH + H(+). Its function is as follows. In the forward direction also acts on secondary amine dicarboxylates such as N-(1-carboxyethyl)methionine and N-(1-carboxyethyl)phenylalanine. In the reverse direction, the enzyme also acts on neutral amino acids as an amino donor. They include L-amino acids such as 2-aminopentanoic acid, 2-aminobutyric acid, 2-aminohexanoic acid, 3-chloroalanine, O-acetylserine, methionine, isoleucine, valine, phenylalanine, leucine and alanine. This Arthrobacter sp. (strain 1C) protein is Opine dehydrogenase (odh).